The sequence spans 354 residues: Caffeate O-methyltransferase-like protein 2 (354 aa).

S-adenosyl-L-homocysteine contacts are provided by Gly198, Asp221, Met242, and Lys255. Catalysis depends on His259, which acts as the Proton acceptor. Catalysis depends on residues Glu287 and Glu319.

The protein belongs to the class I-like SAM-binding methyltransferase superfamily. Cation-independent O-methyltransferase family. COMT subfamily.

In Oryza sativa subsp. japonica (Rice), this protein is Caffeate O-methyltransferase-like protein 2.